We begin with the raw amino-acid sequence, 296 residues long: 4-diphosphocytidyl-2-C-methyl-D-erythritol kinase (296 aa).

Residue Lys-18 is part of the active site. Position 103-113 (103-113) interacts with ATP; the sequence is PHGAGLGGGSS. Residue Asp-146 is part of the active site.

Belongs to the GHMP kinase family. IspE subfamily.

The catalysed reaction is 4-CDP-2-C-methyl-D-erythritol + ATP = 4-CDP-2-C-methyl-D-erythritol 2-phosphate + ADP + H(+). Its pathway is isoprenoid biosynthesis; isopentenyl diphosphate biosynthesis via DXP pathway; isopentenyl diphosphate from 1-deoxy-D-xylulose 5-phosphate: step 3/6. Catalyzes the phosphorylation of the position 2 hydroxy group of 4-diphosphocytidyl-2C-methyl-D-erythritol. This is 4-diphosphocytidyl-2-C-methyl-D-erythritol kinase from Solidesulfovibrio magneticus (strain ATCC 700980 / DSM 13731 / RS-1) (Desulfovibrio magneticus).